The following is a 280-amino-acid chain: Tryptophan synthase alpha chain (280 aa).

Residues E49 and D60 each act as proton acceptor in the active site.

It belongs to the TrpA family. Tetramer of two alpha and two beta chains.

The enzyme catalyses (1S,2R)-1-C-(indol-3-yl)glycerol 3-phosphate + L-serine = D-glyceraldehyde 3-phosphate + L-tryptophan + H2O. Its pathway is amino-acid biosynthesis; L-tryptophan biosynthesis; L-tryptophan from chorismate: step 5/5. In terms of biological role, the alpha subunit is responsible for the aldol cleavage of indoleglycerol phosphate to indole and glyceraldehyde 3-phosphate. The chain is Tryptophan synthase alpha chain from Corynebacterium glutamicum (strain R).